The chain runs to 361 residues: Deoxyhypusine hydroxylase (361 aa).

HEAT-like PBS-type repeat units lie at residues leucine 59–asparagine 85, valine 94–aspartate 120, glutamine 183–aspartate 211, and phenylalanine 216–aspartate 242. Residues histidine 61, glutamate 62, histidine 96, and glutamate 97 each coordinate Fe cation. Fe cation contacts are provided by histidine 218, glutamate 219, histidine 251, and glutamate 252.

Belongs to the deoxyhypusine hydroxylase family. The cofactor is Fe(2+).

The protein resides in the cytoplasm. It is found in the nucleus. The catalysed reaction is [eIF5A protein]-deoxyhypusine + AH2 + O2 = [eIF5A protein]-hypusine + A + H2O. The protein operates within protein modification; eIF5A hypusination. Functionally, catalyzes the hydroxylation of the N(6)-(4-aminobutyl)-L-lysine intermediate to form hypusine, an essential post-translational modification only found in mature eIF-5A factor. The sequence is that of Deoxyhypusine hydroxylase from Cryptococcus neoformans var. neoformans serotype D (strain JEC21 / ATCC MYA-565) (Filobasidiella neoformans).